The primary structure comprises 329 residues: Interleukin-12 subunit beta (329 aa).

A signal peptide spans 1–22 (MHPQQLVIAWLSLVLLAPPLMA). The Ig-like C2-type domain maps to 23–106 (IWELEKNVYV…LSHSFLLIHK (84 aa)). Cys-50 and Cys-90 are oxidised to a cystine. N-linked (GlcNAc...) asparagine glycans are attached at residues Asn-135 and Asn-223. One can recognise a Fibronectin type-III domain in the interval 238 to 329 (PPKNLQLKPL…WSNWASVSCS (92 aa)).

It belongs to the IL-12B family. In terms of assembly, heterodimer with IL12A; disulfide-linked. The heterodimer is known as interleukin IL-12. Heterodimer with IL23A; disulfide-linked. The heterodimer is known as interleukin IL-23. Also secreted as a monomer. Interacts with NBR1; this interaction promotes IL-12 secretion.

It localises to the secreted. Cytokine that can act as a growth factor for activated T and NK cells, enhance the lytic activity of NK/lymphokine-activated killer cells, and stimulate the production of IFN-gamma by resting PBMC. Its function is as follows. Associates with IL23A to form the IL-23 interleukin, a heterodimeric cytokine which functions in innate and adaptive immunity. IL-23 may constitute with IL-17 an acute response to infection in peripheral tissues. IL-23 binds to a heterodimeric receptor complex composed of IL12RB1 and IL23R, activates the Jak-Stat signaling cascade, stimulates memory rather than naive T-cells and promotes production of pro-inflammatory cytokines. IL-23 induces autoimmune inflammation and thus may be responsible for autoimmune inflammatory diseases and may be important for tumorigenesis. The sequence is that of Interleukin-12 subunit beta (IL12B) from Felis catus (Cat).